An 893-amino-acid chain; its full sequence is DNA gyrase subunit A (893 aa).

Residues 35-501 (LPDVRDGLKP…GLEDLEDEDL (467 aa)) form the Topo IIA-type catalytic domain. Tyr123 (O-(5'-phospho-DNA)-tyrosine intermediate) is an active-site residue. A GyrA-box motif is present at residues 528–534 (QNRGGRG). A disordered region spans residues 810 to 893 (VNEEDDNEEN…ASDNEEDSDE (84 aa)). 2 stretches are compositionally biased toward acidic residues: residues 812–821 (EEDDNEENAD) and 852–862 (DAEMESVESPE). Positions 863-879 (NDDRIDIRQDFMDRVNE) are enriched in basic and acidic residues. Over residues 880–893 (DIESASDNEEDSDE) the composition is skewed to acidic residues.

It belongs to the type II topoisomerase GyrA/ParC subunit family. Heterotetramer, composed of two GyrA and two GyrB chains. In the heterotetramer, GyrA contains the active site tyrosine that forms a transient covalent intermediate with DNA, while GyrB binds cofactors and catalyzes ATP hydrolysis.

It is found in the cytoplasm. The enzyme catalyses ATP-dependent breakage, passage and rejoining of double-stranded DNA.. A type II topoisomerase that negatively supercoils closed circular double-stranded (ds) DNA in an ATP-dependent manner to modulate DNA topology and maintain chromosomes in an underwound state. Negative supercoiling favors strand separation, and DNA replication, transcription, recombination and repair, all of which involve strand separation. Also able to catalyze the interconversion of other topological isomers of dsDNA rings, including catenanes and knotted rings. Type II topoisomerases break and join 2 DNA strands simultaneously in an ATP-dependent manner. The protein is DNA gyrase subunit A of Staphylococcus epidermidis (strain ATCC 12228 / FDA PCI 1200).